Here is a 481-residue protein sequence, read N- to C-terminus: Glutamate--tRNA ligase (481 aa).

The 'HIGH' region signature appears at 9 to 19 (PSPTGNLHIGT). A 'KMSKS' region motif is present at residues 247–251 (KLSKR). ATP is bound at residue lysine 250.

This sequence belongs to the class-I aminoacyl-tRNA synthetase family. Glutamate--tRNA ligase type 1 subfamily. In terms of assembly, monomer.

Its subcellular location is the cytoplasm. It carries out the reaction tRNA(Glu) + L-glutamate + ATP = L-glutamyl-tRNA(Glu) + AMP + diphosphate. In terms of biological role, catalyzes the attachment of glutamate to tRNA(Glu) in a two-step reaction: glutamate is first activated by ATP to form Glu-AMP and then transferred to the acceptor end of tRNA(Glu). The sequence is that of Glutamate--tRNA ligase from Nostoc punctiforme (strain ATCC 29133 / PCC 73102).